The following is a 239-amino-acid chain: Ubiquinone biosynthesis O-methyltransferase (239 aa).

Residues arginine 44, glycine 63, aspartate 84, and methionine 128 each coordinate S-adenosyl-L-methionine.

It belongs to the methyltransferase superfamily. UbiG/COQ3 family.

The enzyme catalyses a 3-demethylubiquinol + S-adenosyl-L-methionine = a ubiquinol + S-adenosyl-L-homocysteine + H(+). It carries out the reaction a 3-(all-trans-polyprenyl)benzene-1,2-diol + S-adenosyl-L-methionine = a 2-methoxy-6-(all-trans-polyprenyl)phenol + S-adenosyl-L-homocysteine + H(+). The protein operates within cofactor biosynthesis; ubiquinone biosynthesis. O-methyltransferase that catalyzes the 2 O-methylation steps in the ubiquinone biosynthetic pathway. The chain is Ubiquinone biosynthesis O-methyltransferase from Xanthomonas euvesicatoria pv. vesicatoria (strain 85-10) (Xanthomonas campestris pv. vesicatoria).